The chain runs to 263 residues: Purine nucleoside phosphorylase SAS1121 (263 aa).

Zn(2+)-binding residues include H79, C124, and H141.

The protein belongs to the purine nucleoside phosphorylase YfiH/LACC1 family. In terms of assembly, homodimer. It depends on Cu(2+) as a cofactor. Zn(2+) serves as cofactor.

The catalysed reaction is adenosine + phosphate = alpha-D-ribose 1-phosphate + adenine. The enzyme catalyses S-methyl-5'-thioadenosine + phosphate = 5-(methylsulfanyl)-alpha-D-ribose 1-phosphate + adenine. It catalyses the reaction inosine + phosphate = alpha-D-ribose 1-phosphate + hypoxanthine. It carries out the reaction adenosine + H2O + H(+) = inosine + NH4(+). Purine nucleoside enzyme that catalyzes the phosphorolysis of adenosine and inosine nucleosides, yielding D-ribose 1-phosphate and the respective free bases, adenine and hypoxanthine. Also catalyzes the phosphorolysis of S-methyl-5'-thioadenosine into adenine and S-methyl-5-thio-alpha-D-ribose 1-phosphate. Also has adenosine deaminase activity. This Staphylococcus aureus (strain MSSA476) protein is Purine nucleoside phosphorylase SAS1121.